Here is a 276-residue protein sequence, read N- to C-terminus: NH(3)-dependent NAD(+) synthetase (276 aa).

Position 51–58 (51–58) interacts with ATP; that stretch reads GISGGVDS. Asp-57 is a Mg(2+) binding site. Arg-148 contributes to the deamido-NAD(+) binding site. Thr-168 contacts ATP. Glu-173 is a Mg(2+) binding site. The deamido-NAD(+) site is built by Lys-181 and Asp-188. Positions 197 and 219 each coordinate ATP. 268 to 269 is a binding site for deamido-NAD(+); that stretch reads HK.

The protein belongs to the NAD synthetase family. Homodimer.

It carries out the reaction deamido-NAD(+) + NH4(+) + ATP = AMP + diphosphate + NAD(+) + H(+). It participates in cofactor biosynthesis; NAD(+) biosynthesis; NAD(+) from deamido-NAD(+) (ammonia route): step 1/1. Catalyzes the ATP-dependent amidation of deamido-NAD to form NAD. Uses ammonia as a nitrogen source. The sequence is that of NH(3)-dependent NAD(+) synthetase from Streptomyces coelicolor (strain ATCC BAA-471 / A3(2) / M145).